The chain runs to 234 residues: Large ribosomal subunit protein uL1 (234 aa).

The protein belongs to the universal ribosomal protein uL1 family. As to quaternary structure, part of the 50S ribosomal subunit.

Binds directly to 23S rRNA. The L1 stalk is quite mobile in the ribosome, and is involved in E site tRNA release. In terms of biological role, protein L1 is also a translational repressor protein, it controls the translation of the L11 operon by binding to its mRNA. The sequence is that of Large ribosomal subunit protein uL1 from Serratia proteamaculans (strain 568).